The sequence spans 157 residues: Cyclic pyranopterin monophosphate synthase (157 aa).

Substrate is bound by residues 75–77 (LCH) and 111–112 (ME). The active site involves Asp126.

Belongs to the MoaC family. As to quaternary structure, homohexamer; trimer of dimers.

The catalysed reaction is (8S)-3',8-cyclo-7,8-dihydroguanosine 5'-triphosphate = cyclic pyranopterin phosphate + diphosphate. It participates in cofactor biosynthesis; molybdopterin biosynthesis. Catalyzes the conversion of (8S)-3',8-cyclo-7,8-dihydroguanosine 5'-triphosphate to cyclic pyranopterin monophosphate (cPMP). This Novosphingobium aromaticivorans (strain ATCC 700278 / DSM 12444 / CCUG 56034 / CIP 105152 / NBRC 16084 / F199) protein is Cyclic pyranopterin monophosphate synthase.